The sequence spans 122 residues: Cytochrome b-c1 complex subunit 7-2, mitochondrial (122 aa).

Belongs to the UQCRB/QCR7 family. Component of the ubiquinol-cytochrome c oxidoreductase (cytochrome b-c1 complex, complex III, CIII), a multisubunit enzyme composed of 10 subunits. The complex is composed of 3 respiratory subunits cytochrome b (MT-CYB), cytochrome c1 (CYC1-1 or CYC1-2) and Rieske protein (UCR1-1 or UCR1-2), 2 core protein subunits MPPalpha1 (or MPPalpha2) and MPPB, and 5 low-molecular weight protein subunits QCR7-1 (or QCR7-2), UCRQ-1 (or UCRQ-2), QCR9, UCRY and probably QCR6-1 (or QCR6-2). The complex exists as an obligatory dimer and forms supercomplexes (SCs) in the inner mitochondrial membrane with NADH-ubiquinone oxidoreductase (complex I, CI), resulting in different assemblies (supercomplexes SCI(1)III(2) and SCI(2)III(4)).

It localises to the mitochondrion inner membrane. In terms of biological role, component of the ubiquinol-cytochrome c oxidoreductase, a multisubunit transmembrane complex that is part of the mitochondrial electron transport chain which drives oxidative phosphorylation. The respiratory chain contains 3 multisubunit complexes succinate dehydrogenase (complex II, CII), ubiquinol-cytochrome c oxidoreductase (cytochrome b-c1 complex, complex III, CIII) and cytochrome c oxidase (complex IV, CIV), that cooperate to transfer electrons derived from NADH and succinate to molecular oxygen, creating an electrochemical gradient over the inner membrane that drives transmembrane transport and the ATP synthase. The cytochrome b-c1 complex catalyzes electron transfer from ubiquinol to cytochrome c, linking this redox reaction to translocation of protons across the mitochondrial inner membrane, with protons being carried across the membrane as hydrogens on the quinol. In the process called Q cycle, 2 protons are consumed from the matrix, 4 protons are released into the intermembrane space and 2 electrons are passed to cytochrome c. The polypeptide is Cytochrome b-c1 complex subunit 7-2, mitochondrial (QCR7-2) (Arabidopsis thaliana (Mouse-ear cress)).